The primary structure comprises 565 residues: NAD-dependent malic enzyme (565 aa).

The active-site Proton donor is tyrosine 104. Arginine 157 lines the NAD(+) pocket. The Proton acceptor role is filled by lysine 175. 3 residues coordinate a divalent metal cation: glutamate 246, aspartate 247, and aspartate 270. NAD(+) is bound by residues aspartate 270 and asparagine 418.

It belongs to the malic enzymes family. In terms of assembly, homotetramer. It depends on Mg(2+) as a cofactor. Requires Mn(2+) as cofactor.

It catalyses the reaction (S)-malate + NAD(+) = pyruvate + CO2 + NADH. The catalysed reaction is oxaloacetate + H(+) = pyruvate + CO2. This chain is NAD-dependent malic enzyme, found in Shigella sonnei (strain Ss046).